The primary structure comprises 378 residues: 3-dehydroquinate synthase (378 aa).

NAD(+) is bound by residues 115–119 (GVVGD), 139–140 (TS), Lys152, and Lys161. Zn(2+) contacts are provided by Glu194, His256, and His275.

The protein belongs to the sugar phosphate cyclases superfamily. Dehydroquinate synthase family. It depends on Co(2+) as a cofactor. The cofactor is Zn(2+). NAD(+) is required as a cofactor.

It localises to the cytoplasm. It catalyses the reaction 7-phospho-2-dehydro-3-deoxy-D-arabino-heptonate = 3-dehydroquinate + phosphate. It functions in the pathway metabolic intermediate biosynthesis; chorismate biosynthesis; chorismate from D-erythrose 4-phosphate and phosphoenolpyruvate: step 2/7. Its function is as follows. Catalyzes the conversion of 3-deoxy-D-arabino-heptulosonate 7-phosphate (DAHP) to dehydroquinate (DHQ). The protein is 3-dehydroquinate synthase of Brucella canis (strain ATCC 23365 / NCTC 10854 / RM-666).